The primary structure comprises 154 residues: Crossover junction endodeoxyribonuclease RuvC (154 aa).

Residues Asp7, Glu67, and Asp139 contribute to the active site. Residues Asp7, Glu67, and Asp139 each contribute to the Mg(2+) site.

This sequence belongs to the RuvC family. Homodimer which binds Holliday junction (HJ) DNA. The HJ becomes 2-fold symmetrical on binding to RuvC with unstacked arms; it has a different conformation from HJ DNA in complex with RuvA. In the full resolvosome a probable DNA-RuvA(4)-RuvB(12)-RuvC(2) complex forms which resolves the HJ. Mg(2+) serves as cofactor.

The protein localises to the cytoplasm. It carries out the reaction Endonucleolytic cleavage at a junction such as a reciprocal single-stranded crossover between two homologous DNA duplexes (Holliday junction).. The RuvA-RuvB-RuvC complex processes Holliday junction (HJ) DNA during genetic recombination and DNA repair. Endonuclease that resolves HJ intermediates. Cleaves cruciform DNA by making single-stranded nicks across the HJ at symmetrical positions within the homologous arms, yielding a 5'-phosphate and a 3'-hydroxyl group; requires a central core of homology in the junction. The consensus cleavage sequence is 5'-(A/T)TT(C/G)-3'. Cleavage occurs on the 3'-side of the TT dinucleotide at the point of strand exchange. HJ branch migration catalyzed by RuvA-RuvB allows RuvC to scan DNA until it finds its consensus sequence, where it cleaves and resolves the cruciform DNA. In Synechococcus sp. (strain CC9902), this protein is Crossover junction endodeoxyribonuclease RuvC.